Consider the following 316-residue polypeptide: Transcription termination/antitermination protein NusG (316 aa).

Belongs to the NusG family.

Functionally, participates in transcription elongation, termination and antitermination. In Mycoplasma genitalium (strain ATCC 33530 / DSM 19775 / NCTC 10195 / G37) (Mycoplasmoides genitalium), this protein is Transcription termination/antitermination protein NusG.